A 381-amino-acid chain; its full sequence is Stearoyl-[acyl-carrier-protein] 9-desaturase 1, chloroplastic (381 aa).

A chloroplast-targeting transit peptide spans 1-26 (MQVVGTVRVSGCGAVVAPSRRQCRVS). Residues E120, E158, H161, E211, E244, and H247 each contribute to the Fe cation site.

Belongs to the fatty acid desaturase type 2 family. Homodimer. It depends on Fe(2+) as a cofactor.

It localises to the plastid. The protein localises to the chloroplast. The enzyme catalyses octadecanoyl-[ACP] + 2 reduced [2Fe-2S]-[ferredoxin] + O2 + 2 H(+) = (9Z)-octadecenoyl-[ACP] + 2 oxidized [2Fe-2S]-[ferredoxin] + 2 H2O. It functions in the pathway lipid metabolism; fatty acid metabolism. Functionally, converts stearoyl-ACP to oleoyl-ACP by introduction of a cis double bond between carbons 9 and 10 of the acyl chain. The sequence is that of Stearoyl-[acyl-carrier-protein] 9-desaturase 1, chloroplastic from Oryza sativa subsp. indica (Rice).